The sequence spans 393 residues: Beta-ureidopropionase (393 aa).

Residues 72–344 (VRVGLVQNRI…DGLLVTELNL (273 aa)) form the CN hydrolase domain. The active-site Proton acceptor is E119. K196 (proton donor) is an active-site residue. The Nucleophile role is filled by C233. S378 carries the post-translational modification Phosphoserine.

Belongs to the carbon-nitrogen hydrolase superfamily. BUP family. As to quaternary structure, homodimer, homotetramer, homooctamer; can also form higher homooligomers. Post-translationally, the N-terminus is blocked. In terms of tissue distribution, detected in liver (at protein level).

It localises to the cytoplasm. It carries out the reaction 3-(carbamoylamino)propanoate + H2O + 2 H(+) = beta-alanine + NH4(+) + CO2. The catalysed reaction is 3-(carbamoylamino)-2-methylpropanoate + H2O + 2 H(+) = (R)-3-amino-2-methylpropanoate + NH4(+) + CO2. It participates in amino-acid biosynthesis; beta-alanine biosynthesis. With respect to regulation, allosteric enzyme with positive cooperativity toward the substrate N-carbamoyl-beta-alanine at low substrate concentrations (below 12 nM). Displays no cooperativity at substrate levels above 12 nM. Its function is as follows. Catalyzes a late step in pyrimidine degradation. Converts N-carbamoyl-beta-alanine (3-ureidopropanoate) into beta-alanine, ammonia and carbon dioxide. Likewise, converts N-carbamoyl-beta-aminoisobutyrate (3-ureidoisobutyrate) into beta-aminoisobutyrate, ammonia and carbon dioxide. This chain is Beta-ureidopropionase (Upb1), found in Rattus norvegicus (Rat).